The primary structure comprises 1126 residues: MASDGTSPLPGPDMSMKPGTGLSPFSALPFAPPPPVPPDQPLWEPSPQPPIPPVFSPSNPLLLSAFPSPLLVTGEGGPGPSVAGTGQVIVKVKTDVGPAESSQTQNLIVTQTALNWIPSGAPCGSQEGPPPPRYVTASNVKTILPAVAVGVSQEGLAGLPLQVLPPAAQLAPIVPLEKPWPGTQATTMEGGPVAARKPSQGDLAYASKGVYENYRRWQRYKVLARTHLSQSPDVEALSCFLIPVLRSLARLKPTMTLEEGLPRALQEWERTSNFDRMIFYEMAEKFMEFEAEEETQIQNAQLMNGSPGLSPIAPLKLDPPGSMVPEACQQPVYIPKKAASKTRAPRRRQRKPQRPPVPEAPKEIPPEAVQEYVDIMDGLMGSYVDTGKTEEEEEGQQEGAGMYPDPSLLSYIDELCSQEVFVSKVEAVIHPQFLADLLSPEEQRDPLSLLEELEQEEGLNLAQLVQKRLLALEEEDAQTPPSCSGAQSDSSPSVSDEDEDGGQRRRPSPGLQGAAGIVRIGKSASPGKQAREIHGGQEQTLGGPAGIHKDGNNLPSPSSWDVQLELTASQGMPVLLGMERKMSGKAIKQLSATQDGHLGRTGSPGYYPVADRNPEVLPCCWQEDPQHMRAPNFDVGLTEPVPLQGLGLEKQALTLQIGKRIGGAGMLTRGREPPSVVSQKGSSRAVRGDDRGPGMLQSYSQNHSPGAAGNLDRVSLSPGLWLSSDMGAVGLELPLQIETVIDSIQDEACRREDQALNSRNSASLGPRKNTVPKDVGNSVIPSGGPDTTAVPEKRNPCSLPGSLMASGPGLRSKEKISKENQALSPKTIQNPSDLWAEACPPLLPTLVSSTLGSSKDTLIPTCQGNLLIIGTQDASSLAQTSQKAESRGNLLFPLLENIDQVTILDVKDDSCPQPGVSKDSCLSNFNSYNLQGEGREDTVSSKPTDLVPLQDNQESYTHETTKLTNGQGQGSTSPRWATRDAYILRETPIKEKCTSADRAKRRETEKEEEDEELSNFSYLLASKLSLSSGGLPLSTRQASGGQGIVKTSRHSTEVDDLGQPSPPPKSGKQALVGSPATVVERDQQGAQFNGSGQKPLALGMAQLPQPRKRRRDGFVTSKRKKRRRSQ.

Disordered regions lie at residues methionine 1–serine 56, isoleucine 334–glutamate 367, glutamate 475–alanine 515, glutamine 537–serine 559, alanine 664–glycine 692, alanine 755–leucine 810, and glycine 932–serine 1014. Pro residues predominate over residues phenylalanine 30–phenylalanine 55. The span at alanine 338 to glutamine 353 shows a compositional bias: basic residues. A compositionally biased stretch (polar residues) spans lysine 962–arginine 975. Serine 973 carries the phosphoserine modification. Residues threonine 987–glutamate 1005 are compositionally biased toward basic and acidic residues. 3 positions are modified to phosphoserine: serine 1022, serine 1025, and serine 1027. The segment at proline 1032 to glutamine 1126 is disordered. An N5-methylglutamine modification is found at glutamine 1042. Residues proline 1106–glutamine 1126 show a composition bias toward basic residues.

Belongs to the NUT family. In terms of processing, methylated at Gln-1042 by N6AMT1. Phosphorylation on Ser-1022, Ser-1025 or Ser-1027 is important for cytoplasmic export.

It is found in the cytoplasm. The protein localises to the nucleus. Plays a role in the regulation of proliferation. Regulates TERT expression by modulating SP1 binding to TERT promoter binding sites. This chain is NUT family member 1, found in Mus musculus (Mouse).